We begin with the raw amino-acid sequence, 1563 residues long: Pentafunctional AROM polypeptide (1563 aa).

Residues 1–382 (MAESSSNPTR…YEPKASVVED (382 aa)) are 3-dehydroquinate synthase. Residues 48–50 (DTN), 82–85 (EYSK), 113–115 (GGV), and Asp-118 each bind NAD(+). Arg-129 contacts 7-phospho-2-dehydro-3-deoxy-D-arabino-heptonate. Residue 138 to 139 (TT) coordinates NAD(+). Positions 145 and 151 each coordinate 7-phospho-2-dehydro-3-deoxy-D-arabino-heptonate. Position 160 (Lys-160) interacts with NAD(+). Asn-161 lines the 7-phospho-2-dehydro-3-deoxy-D-arabino-heptonate pocket. NAD(+) contacts are provided by residues 178–181 (FLNT) and Asn-189. Residue Glu-193 participates in Zn(2+) binding. 7-phospho-2-dehydro-3-deoxy-D-arabino-heptonate is bound by residues 193–196 (EVIK) and Lys-248. Glu-258 functions as the Proton acceptor; for 3-dehydroquinate synthase activity in the catalytic mechanism. 7-phospho-2-dehydro-3-deoxy-D-arabino-heptonate-binding positions include 262 to 266 (RNLLN) and His-269. His-269 serves as a coordination point for Zn(2+). The Proton acceptor; for 3-dehydroquinate synthase activity role is filled by His-273. The 7-phospho-2-dehydro-3-deoxy-D-arabino-heptonate site is built by His-285 and Lys-354. A Zn(2+)-binding site is contributed by His-285. The segment at 395 to 834 (VHAGVPKDLK…WDTMSNYFKS (440 aa)) is EPSP synthase. Cys-816 acts as the For EPSP synthase activity in catalysis. Basic and acidic residues predominate over residues 836–850 (LEGEEEPHSSHVSHE). The tract at residues 836-857 (LEGEEEPHSSHVSHEKPRKGNP) is disordered. The shikimate kinase stretch occupies residues 857–1051 (PKSIFIIGMR…KKKPQSSFVS (195 aa)). Residue 864–871 (GMRGAGKS) coordinates ATP. The interval 1052-1265 (LTVPNVSKAL…AAPGQLSAAE (214 aa)) is 3-dehydroquinase. The Proton acceptor; for 3-dehydroquinate dehydratase activity role is filled by His-1168. The Schiff-base intermediate with substrate; for 3-dehydroquinate dehydratase activity role is filled by Lys-1196. The shikimate dehydrogenase stretch occupies residues 1278–1563 (PRSFYLFGKP…TDAQAAVMGN (286 aa)).

This sequence in the N-terminal section; belongs to the sugar phosphate cyclases superfamily. Dehydroquinate synthase family. In the 2nd section; belongs to the EPSP synthase family. The protein in the 3rd section; belongs to the shikimate kinase family. It in the 4th section; belongs to the type-I 3-dehydroquinase family. This sequence in the C-terminal section; belongs to the shikimate dehydrogenase family. As to quaternary structure, homodimer. It depends on Zn(2+) as a cofactor.

The protein resides in the cytoplasm. It catalyses the reaction 7-phospho-2-dehydro-3-deoxy-D-arabino-heptonate = 3-dehydroquinate + phosphate. The catalysed reaction is 3-dehydroquinate = 3-dehydroshikimate + H2O. It carries out the reaction shikimate + NADP(+) = 3-dehydroshikimate + NADPH + H(+). The enzyme catalyses shikimate + ATP = 3-phosphoshikimate + ADP + H(+). It catalyses the reaction 3-phosphoshikimate + phosphoenolpyruvate = 5-O-(1-carboxyvinyl)-3-phosphoshikimate + phosphate. It participates in metabolic intermediate biosynthesis; chorismate biosynthesis; chorismate from D-erythrose 4-phosphate and phosphoenolpyruvate: step 2/7. Its pathway is metabolic intermediate biosynthesis; chorismate biosynthesis; chorismate from D-erythrose 4-phosphate and phosphoenolpyruvate: step 3/7. The protein operates within metabolic intermediate biosynthesis; chorismate biosynthesis; chorismate from D-erythrose 4-phosphate and phosphoenolpyruvate: step 4/7. It functions in the pathway metabolic intermediate biosynthesis; chorismate biosynthesis; chorismate from D-erythrose 4-phosphate and phosphoenolpyruvate: step 5/7. It participates in metabolic intermediate biosynthesis; chorismate biosynthesis; chorismate from D-erythrose 4-phosphate and phosphoenolpyruvate: step 6/7. In terms of biological role, the AROM polypeptide catalyzes 5 consecutive enzymatic reactions in prechorismate polyaromatic amino acid biosynthesis. This chain is Pentafunctional AROM polypeptide, found in Sordaria macrospora (strain ATCC MYA-333 / DSM 997 / K(L3346) / K-hell).